A 228-amino-acid polypeptide reads, in one-letter code: F-box protein At5g67140 (228 aa).

Residues E4 to T51 form the F-box domain.

The protein is F-box protein At5g67140 of Arabidopsis thaliana (Mouse-ear cress).